A 422-amino-acid chain; its full sequence is 4-hydroxy-3-methylbut-2-en-1-yl diphosphate synthase (flavodoxin) (422 aa).

Cys316, Cys319, Cys362, and Glu369 together coordinate [4Fe-4S] cluster.

It belongs to the IspG family. Requires [4Fe-4S] cluster as cofactor.

It catalyses the reaction (2E)-4-hydroxy-3-methylbut-2-enyl diphosphate + oxidized [flavodoxin] + H2O + 2 H(+) = 2-C-methyl-D-erythritol 2,4-cyclic diphosphate + reduced [flavodoxin]. It participates in isoprenoid biosynthesis; isopentenyl diphosphate biosynthesis via DXP pathway; isopentenyl diphosphate from 1-deoxy-D-xylulose 5-phosphate: step 5/6. Its function is as follows. Converts 2C-methyl-D-erythritol 2,4-cyclodiphosphate (ME-2,4cPP) into 1-hydroxy-2-methyl-2-(E)-butenyl 4-diphosphate. The polypeptide is 4-hydroxy-3-methylbut-2-en-1-yl diphosphate synthase (flavodoxin) (Ehrlichia canis (strain Jake)).